Here is a 135-residue protein sequence, read N- to C-terminus: S-adenosylmethionine decarboxylase proenzyme (135 aa).

Residue serine 64 is the Schiff-base intermediate with substrate; via pyruvic acid of the active site. Serine 64 bears the Pyruvic acid (Ser); by autocatalysis mark. Histidine 69 serves as the catalytic Proton acceptor; for processing activity. Cysteine 84 serves as the catalytic Proton donor; for catalytic activity.

This sequence belongs to the prokaryotic AdoMetDC family. Type 1 subfamily. Heterotetramer of two alpha and two beta chains arranged as a dimer of alpha/beta heterodimers. Requires pyruvate as cofactor. Is synthesized initially as an inactive proenzyme. Formation of the active enzyme involves a self-maturation process in which the active site pyruvoyl group is generated from an internal serine residue via an autocatalytic post-translational modification. Two non-identical subunits are generated from the proenzyme in this reaction, and the pyruvate is formed at the N-terminus of the alpha chain, which is derived from the carboxyl end of the proenzyme. The post-translation cleavage follows an unusual pathway, termed non-hydrolytic serinolysis, in which the side chain hydroxyl group of the serine supplies its oxygen atom to form the C-terminus of the beta chain, while the remainder of the serine residue undergoes an oxidative deamination to produce ammonia and the pyruvoyl group blocking the N-terminus of the alpha chain.

The enzyme catalyses S-adenosyl-L-methionine + H(+) = S-adenosyl 3-(methylsulfanyl)propylamine + CO2. It functions in the pathway amine and polyamine biosynthesis; S-adenosylmethioninamine biosynthesis; S-adenosylmethioninamine from S-adenosyl-L-methionine: step 1/1. Its function is as follows. Catalyzes the decarboxylation of S-adenosylmethionine to S-adenosylmethioninamine (dcAdoMet), the propylamine donor required for the synthesis of the polyamines spermine and spermidine from the diamine putrescine. The polypeptide is S-adenosylmethionine decarboxylase proenzyme (Aquifex aeolicus (strain VF5)).